Here is a 750-residue protein sequence, read N- to C-terminus: Catalase-peroxidase 1 (750 aa).

Positions 90-238 form a cross-link, tryptophyl-tyrosyl-methioninium (Trp-Tyr) (with M-264); the sequence is WHSAGTYRVM…VSAAHMGLIY (149 aa). Histidine 91 serves as the catalytic Proton acceptor. The segment at 199–218 is disordered; it reads NEGHKESGVIDGSESKKGHK. Positions 200 to 218 are enriched in basic and acidic residues; the sequence is EGHKESGVIDGSESKKGHK. Positions 238–264 form a cross-link, tryptophyl-tyrosyl-methioninium (Tyr-Met) (with W-90); the sequence is YVNPEGPDGIPDPVAAARDIRTTFSRM. Position 279 (histidine 279) interacts with heme b.

The protein belongs to the peroxidase family. Peroxidase/catalase subfamily. In terms of assembly, homodimer or homotetramer. Predominantly homodimeric. It depends on heme b as a cofactor. Post-translationally, formation of the three residue Trp-Tyr-Met cross-link is important for the catalase, but not the peroxidase activity of the enzyme.

It localises to the cytoplasm. The catalysed reaction is H2O2 + AH2 = A + 2 H2O. It catalyses the reaction 2 H2O2 = O2 + 2 H2O. Bifunctional enzyme with both catalase and broad-spectrum peroxidase activity. In Pyricularia oryzae (strain 70-15 / ATCC MYA-4617 / FGSC 8958) (Rice blast fungus), this protein is Catalase-peroxidase 1.